A 396-amino-acid chain; its full sequence is Calcium-responsive transactivator (396 aa).

Positions 1-148 (MSVAFASARP…TLPTTSMSIS (148 aa)) are N-terminal auto-inhibitory domain; necessary for interaction with SMARCA4/BRG1. The SH2-binding signature appears at 50–53 (YQQI). Disordered stretches follow at residues 72-162 (QSLL…SQGV), 192-280 (QAAT…GDYA), and 311-396 (SQQQ…NYQQ). Residues 90–106 (LTQSGSSQGLHSQGSLS) are compositionally biased toward low complexity. Polar residues-rich tracts occupy residues 107 to 122 (DAIS…LQGQ) and 128 to 147 (SHVS…SMSI). The segment at 149-232 (GPGYSHAGPA…GSSMMGQRPM (84 aa)) is methionine-rich intra-molecular domain. 3 stretches are compositionally biased toward low complexity: residues 199-229 (SSAQ…MMGQ), 238-261 (SQQG…SHSQ), and 311-369 (SQQQ…YGSY). The interval 246-317 (YLGQEEYYGE…SQYSQQQAGY (72 aa)) is MFD domain. Residues 334–396 (SQQSYPGQQQ…EQGQYGNYQQ (63 aa)) are necessary for nuclear localization. The SH2-binding motif lies at 353–356 (SQYP). Positions 371-379 (APQTAPSAQ) match the SH3-binding motif. Residues 384–396 (YGYEQGQYGNYQQ) are compositionally biased toward low complexity. Positions 387-396 (EQGQYGNYQQ) are necessary for interaction with CREBBP and for the recruitment of CREBBP to the nuclear bodies. Positions 391–394 (YGNY) match the SH2-binding motif.

Belongs to the SS18 family. As to quaternary structure, homodimer. Dimerization may be necessary for its function in neuronal dendritic development. Interacts (via C-terminus) with CREBBP (via N-terminus), EP300 and SMARCA4/BRG1. Interacts with the nBAF complex. Association with CREBBP facilitates transcription while the association with SMARCA4/BRG1 suppresses CREST-mediated transcription in resting neurons. As to expression, ubiquitous; with lowest levels in spleen.

It localises to the nucleus. The protein resides in the chromosome. It is found in the centromere. Its subcellular location is the kinetochore. Its function is as follows. Transcriptional activator which is required for calcium-dependent dendritic growth and branching in cortical neurons. Recruits CREB-binding protein (CREBBP) to nuclear bodies. Component of the CREST-BRG1 complex, a multiprotein complex that regulates promoter activation by orchestrating a calcium-dependent release of a repressor complex and a recruitment of an activator complex. In resting neurons, transcription of the c-FOS promoter is inhibited by BRG1-dependent recruitment of a phospho-RB1-HDAC1 repressor complex. Upon calcium influx, RB1 is dephosphorylated by calcineurin, which leads to release of the repressor complex. At the same time, there is increased recruitment of CREBBP to the promoter by a CREST-dependent mechanism, which leads to transcriptional activation. The CREST-BRG1 complex also binds to the NR2B promoter, and activity-dependent induction of NR2B expression involves a release of HDAC1 and recruitment of CREBBP. This Homo sapiens (Human) protein is Calcium-responsive transactivator (SS18L1).